We begin with the raw amino-acid sequence, 174 residues long: Alpha-crystallin B chain (174 aa).

Met1 carries the N-acetylmethionine modification. The region spanning 55–163 is the sHSP domain; sequence RMPSWLETGL…PERSIPITRE (109 aa). Residues His82, His103, Glu105, and His110 each coordinate Zn(2+). A disordered region spans residues 148-174; it reads RKQSDVPERSIPITREEKPAIAGAQRK. Over residues 149–166 the composition is skewed to basic and acidic residues; sequence KQSDVPERSIPITREEKP.

The protein belongs to the small heat shock protein (HSP20) family. In terms of assembly, heteromer composed of three CRYAA and one CRYAB subunits. Aggregates with homologous proteins, including the small heat shock protein HSPB1, to form large heteromeric complexes. Inter-subunit bridging via zinc ions enhances stability, which is crucial as there is no protein turn over in the lens. As to expression, lens as well as other tissues.

May contribute to the transparency and refractive index of the lens. In Anas platyrhynchos (Mallard), this protein is Alpha-crystallin B chain (CRYAB).